A 509-amino-acid chain; its full sequence is Maturase K (509 aa).

The protein belongs to the intron maturase 2 family. MatK subfamily.

Its subcellular location is the plastid. The protein resides in the chloroplast. In terms of biological role, usually encoded in the trnK tRNA gene intron. Probably assists in splicing its own and other chloroplast group II introns. The protein is Maturase K of Ibicella lutea (Yellow unicorn-plant).